A 445-amino-acid polypeptide reads, in one-letter code: 6-phosphogluconate dehydrogenase, decarboxylating (445 aa).

NADP(+) contacts are provided by residues 1 to 4 (AVMG), 22 to 24 (NRS), 63 to 65 (VKA), and Asn-91. Residues Asn-91 and 117 to 119 (SGG) contribute to the substrate site. The active-site Proton acceptor is the Lys-172. 175–176 (HN) is a substrate binding site. The active-site Proton donor is Glu-179. Residues Tyr-180, Lys-249, Arg-276, Arg-434, and His-440 each coordinate substrate.

The protein belongs to the 6-phosphogluconate dehydrogenase family. As to quaternary structure, homodimer.

It carries out the reaction 6-phospho-D-gluconate + NADP(+) = D-ribulose 5-phosphate + CO2 + NADPH. It participates in carbohydrate degradation; pentose phosphate pathway; D-ribulose 5-phosphate from D-glucose 6-phosphate (oxidative stage): step 3/3. Its function is as follows. Catalyzes the oxidative decarboxylation of 6-phosphogluconate to ribulose 5-phosphate and CO(2), with concomitant reduction of NADP to NADPH. The polypeptide is 6-phosphogluconate dehydrogenase, decarboxylating (gnd) (Raoultella planticola (Klebsiella planticola)).